The primary structure comprises 185 residues: Ribosome-recycling factor (185 aa).

Residues 142 to 164 (IKKDGDAGEDDVTRAEKDLDKST) are compositionally biased toward basic and acidic residues. The interval 142–173 (IKKDGDAGEDDVTRAEKDLDKSTHQYTSQVDD) is disordered.

This sequence belongs to the RRF family.

It localises to the cytoplasm. Responsible for the release of ribosomes from messenger RNA at the termination of protein biosynthesis. May increase the efficiency of translation by recycling ribosomes from one round of translation to another. This Mycolicibacterium gilvum (strain PYR-GCK) (Mycobacterium gilvum (strain PYR-GCK)) protein is Ribosome-recycling factor.